The sequence spans 122 residues: uncharacterized protein (122 aa).

This is an uncharacterized protein from Caenorhabditis elegans.